The sequence spans 377 residues: uncharacterized protein (377 aa).

Positions 1–22 are cleaved as a signal peptide; it reads MKFKYGTVVLGSFLGLSVVLAA. The N-palmitoyl cysteine moiety is linked to residue C23. C23 carries S-diacylglycerol cysteine lipidation. Residues 217–260 are disordered; that stretch reads AKANGETNQKGRKAAKSNKTALVQLKNGADTTTNEENKDTKTSD. Positions 251–260 are enriched in basic and acidic residues; sequence EENKDTKTSD.

This sequence belongs to the MG185/MG260 family.

The protein localises to the cell membrane. This is an uncharacterized protein from Mycoplasma pneumoniae (strain ATCC 29342 / M129 / Subtype 1) (Mycoplasmoides pneumoniae).